Reading from the N-terminus, the 520-residue chain is Probable E3 ubiquitin-protein ligase rbrA (520 aa).

Positions 1–42 (MTDDEMYEDYDVDDDSAEESGNESLDDTEYDDAATQEFDFDE) are enriched in acidic residues. Positions 1–51 (MTDDEMYEDYDVDDDSAEESGNESLDDTEYDDAATQEFDFDENQPQRSLGK) are disordered. Residues 135-354 (GNVSCLICLE…GGYYNCNKYD (220 aa)) are TRIAD supradomain. Zn(2+) contacts are provided by Cys139, Cys142, Cys156, His158, Cys161, Cys164, Cys184, Cys189, Cys228, Cys233, Cys250, Cys252, Cys257, Cys260, His268, Cys273, Cys300, and Cys303. The RING-type 1 zinc finger occupies 139–189 (CLICLEDYPPTQTFALICNHRYCLPCYKNYLEIKVSEGPECIYTPCPAPKC). Residues 208 to 273 (ERFNNFILKS…EIGDHMPCPC (66 aa)) form an IBR-type zinc finger. The RING-type 2; atypical zinc finger occupies 300–333 (CPECRSPIEKNGGCMHMTCRKNAGGCGFEFCWLC). The active site involves Cys313. 6 residues coordinate Zn(2+): Cys318, Cys325, Cys330, Cys333, His340, and Cys350.

It belongs to the RBR family.

It carries out the reaction [E2 ubiquitin-conjugating enzyme]-S-ubiquitinyl-L-cysteine + [acceptor protein]-L-lysine = [E2 ubiquitin-conjugating enzyme]-L-cysteine + [acceptor protein]-N(6)-ubiquitinyl-L-lysine.. It participates in protein modification; protein ubiquitination. Functionally, might act as an E3 ubiquitin-protein ligase. Appears to be required for normal cell-type proportioning and cell sorting during multicellular development. In addition to being necessary for a normal percentage of prestalk cells and the organization of the slug, rbrA is also necessary for spore cell viability. The polypeptide is Probable E3 ubiquitin-protein ligase rbrA (rbrA) (Dictyostelium discoideum (Social amoeba)).